We begin with the raw amino-acid sequence, 209 residues long: Large ribosomal subunit protein uL4 (209 aa).

Residues 45-80 (RQGTHKAKERSELSGSTRKLIRQKGSGGARRGDINS) are disordered.

The protein belongs to the universal ribosomal protein uL4 family. In terms of assembly, part of the 50S ribosomal subunit.

Its function is as follows. One of the primary rRNA binding proteins, this protein initially binds near the 5'-end of the 23S rRNA. It is important during the early stages of 50S assembly. It makes multiple contacts with different domains of the 23S rRNA in the assembled 50S subunit and ribosome. Forms part of the polypeptide exit tunnel. The chain is Large ribosomal subunit protein uL4 from Porphyromonas gingivalis (strain ATCC BAA-308 / W83).